A 406-amino-acid chain; its full sequence is S-adenosylmethionine synthase (406 aa).

H16 serves as a coordination point for ATP. Residue D18 participates in Mg(2+) binding. E44 serves as a coordination point for K(+). Residues E57 and Q100 each contribute to the L-methionine site. Residues 100 to 110 form a flexible loop region; that stretch reads QSVDIAQGVDR. Residues 165–167, D241, 247–248, A264, and K268 each bind ATP; these read DAK and RK. D241 is an L-methionine binding site. K272 lines the L-methionine pocket.

It belongs to the AdoMet synthase family. In terms of assembly, homotetramer; dimer of dimers. Mg(2+) is required as a cofactor. The cofactor is K(+).

The protein resides in the cytoplasm. It carries out the reaction L-methionine + ATP + H2O = S-adenosyl-L-methionine + phosphate + diphosphate. The protein operates within amino-acid biosynthesis; S-adenosyl-L-methionine biosynthesis; S-adenosyl-L-methionine from L-methionine: step 1/1. Its function is as follows. Catalyzes the formation of S-adenosylmethionine (AdoMet) from methionine and ATP. The overall synthetic reaction is composed of two sequential steps, AdoMet formation and the subsequent tripolyphosphate hydrolysis which occurs prior to release of AdoMet from the enzyme. This Chromohalobacter salexigens (strain ATCC BAA-138 / DSM 3043 / CIP 106854 / NCIMB 13768 / 1H11) protein is S-adenosylmethionine synthase.